A 591-amino-acid chain; its full sequence is L-fucose isomerase (591 aa).

Catalysis depends on proton acceptor residues E337 and D361. Mn(2+) is bound by residues E337, D361, and H528.

The protein belongs to the L-fucose isomerase family. As to quaternary structure, homohexamer. The cofactor is Mn(2+).

Its subcellular location is the cytoplasm. It catalyses the reaction L-fucose = L-fuculose. It functions in the pathway carbohydrate degradation; L-fucose degradation; L-lactaldehyde and glycerone phosphate from L-fucose: step 1/3. In terms of biological role, converts the aldose L-fucose into the corresponding ketose L-fuculose. In Salmonella typhi, this protein is L-fucose isomerase.